A 270-amino-acid chain; its full sequence is Phosphatidylinositol transfer protein alpha isoform (270 aa).

Residues T58, K60, E85, N89, T96, and K194 each coordinate a 1,2-diacyl-sn-glycero-3-phospho-(1D-myo-inositol). The residue at position 215 (K215) is an N6-acetyllysine. Residues T250–V263 are compositionally biased toward basic and acidic residues. The segment at T250–D270 is disordered.

It belongs to the PtdIns transfer protein family. PI transfer class I subfamily.

The protein resides in the cytoplasm. Its subcellular location is the nucleus. It catalyses the reaction a 1,2-diacyl-sn-glycero-3-phosphocholine(in) = a 1,2-diacyl-sn-glycero-3-phosphocholine(out). The enzyme catalyses a 1,2-diacyl-sn-glycero-3-phospho-(1D-myo-inositol)(in) = a 1,2-diacyl-sn-glycero-3-phospho-(1D-myo-inositol)(out). Its activity is regulated as follows. Phosphatidylinositol transfer activity is inhibited by N-ethylmaleimide. Functionally, catalyzes the transfer of phosphatidylinositol (PI) and phosphatidylcholine (PC) between membranes. Shows a preference for PI and PC containing shorter saturated or monosaturated acyl chains at the sn-1 and sn-2 positions. Preference order for PC is C16:1 &gt; C16:0 &gt; C18:1 &gt; C18:0 &gt; C20:4 and for PI is C16:1 &gt; C16:0 &gt; C18:1 &gt; C18:0 &gt; C20:4 &gt; C20:3. The protein is Phosphatidylinositol transfer protein alpha isoform (PITPNA) of Homo sapiens (Human).